The chain runs to 99 residues: Integration host factor subunit alpha (99 aa).

The protein belongs to the bacterial histone-like protein family. As to quaternary structure, heterodimer of an alpha and a beta chain.

In terms of biological role, this protein is one of the two subunits of integration host factor, a specific DNA-binding protein that functions in genetic recombination as well as in transcriptional and translational control. The protein is Integration host factor subunit alpha of Psychrobacter cryohalolentis (strain ATCC BAA-1226 / DSM 17306 / VKM B-2378 / K5).